Reading from the N-terminus, the 123-residue chain is Small ribosomal subunit protein uS12 (123 aa).

Residue Asp-89 is modified to 3-methylthioaspartic acid.

This sequence belongs to the universal ribosomal protein uS12 family. Part of the 30S ribosomal subunit. Contacts proteins S8 and S17. May interact with IF1 in the 30S initiation complex.

Its function is as follows. With S4 and S5 plays an important role in translational accuracy. Functionally, interacts with and stabilizes bases of the 16S rRNA that are involved in tRNA selection in the A site and with the mRNA backbone. Located at the interface of the 30S and 50S subunits, it traverses the body of the 30S subunit contacting proteins on the other side and probably holding the rRNA structure together. The combined cluster of proteins S8, S12 and S17 appears to hold together the shoulder and platform of the 30S subunit. This Methylobacterium sp. (strain 4-46) protein is Small ribosomal subunit protein uS12.